Consider the following 94-residue polypeptide: Integration host factor subunit beta (94 aa).

Belongs to the bacterial histone-like protein family. As to quaternary structure, heterodimer of an alpha and a beta chain.

This protein is one of the two subunits of integration host factor, a specific DNA-binding protein that functions in genetic recombination as well as in transcriptional and translational control. This Yersinia enterocolitica serotype O:8 / biotype 1B (strain NCTC 13174 / 8081) protein is Integration host factor subunit beta.